Here is a 434-residue protein sequence, read N- to C-terminus: Beta-enolase (434 aa).

At A2 the chain carries N-acetylalanine. T72 is subject to Phosphothreonine. S83 and S157 each carry phosphoserine. Residues H158 and E167 each coordinate substrate. At S176 the chain carries Phosphoserine. Phosphothreonine is present on T205. E210 acts as the Proton donor in catalysis. T229 carries the post-translational modification Phosphothreonine. A Phosphotyrosine modification is found at Y236. Position 245 (D245) interacts with Mg(2+). The residue at position 263 (S263) is a Phosphoserine. 2 residues coordinate substrate: E293 and D318. Residues E293 and D318 each contribute to the Mg(2+) site. The active-site Proton acceptor is K343. Substrate contacts are provided by residues 370 to 373 (SHRS) and K394.

The protein belongs to the enolase family. In terms of assembly, mammalian enolase is composed of 3 isozyme subunits, alpha, beta and gamma, which can form homodimers or heterodimers which are cell-type and development-specific. Interacts with PNKD. Mg(2+) serves as cofactor. As to expression, the alpha/alpha homodimer is expressed in embryo and in most adult tissues. The alpha/beta heterodimer and the beta/beta homodimer are found in striated muscle, and the alpha/gamma heterodimer and the gamma/gamma homodimer in neurons.

Its subcellular location is the cytoplasm. The catalysed reaction is (2R)-2-phosphoglycerate = phosphoenolpyruvate + H2O. Its pathway is carbohydrate degradation; glycolysis; pyruvate from D-glyceraldehyde 3-phosphate: step 4/5. Functionally, glycolytic enzyme that catalyzes the conversion of 2-phosphoglycerate to phosphoenolpyruvate. Appears to have a function in striated muscle development and regeneration. The protein is Beta-enolase (ENO3) of Homo sapiens (Human).